Consider the following 327-residue polypeptide: Regulatory protein MsrR (327 aa).

Residues 1 to 18 are compositionally biased toward basic and acidic residues; it reads MDKETNDNEYRRQSEHRT. The interval 1–24 is disordered; it reads MDKETNDNEYRRQSEHRTSAPKRK. Residues 1–31 lie on the Cytoplasmic side of the membrane; it reads MDKETNDNEYRRQSEHRTSAPKRKKKKKIRK. The chain crosses the membrane as a helical; Signal-anchor for type II membrane protein span at residues 32–52; it reads LPIILLIVVILLIALVVYIVH. Residues 53-327 lie on the Extracellular side of the membrane; the sequence is SYNSGVEYAK…QAIKDFLDED (275 aa).

It belongs to the LytR/CpsA/Psr (LCP) family.

Its subcellular location is the cell membrane. In terms of biological role, involved in SarA attenuation. Affects resistance to oxacillin and teicoplanin, as well as the synthesis of virulence factors. This chain is Regulatory protein MsrR (msrR), found in Staphylococcus aureus (strain Mu50 / ATCC 700699).